Here is a 354-residue protein sequence, read N- to C-terminus: G-protein coupled receptor homolog US28 (354 aa).

At 1-37 (MTPTTTTAELTTEFDYDEDATPCVFTDVLNQSKPVTL) the chain is on the extracellular side. The N-linked (GlcNAc...) asparagine; by host glycan is linked to Asn-30. Residues 38 to 58 (FLYGVVFLFGSIGNFLVIFTI) traverse the membrane as a helical segment. At 59-69 (TWRRRIQCSGD) the chain is on the cytoplasmic side. The chain crosses the membrane as a helical span at residues 70-90 (VYFINLAAADLLFVCTLPLWM). Residues 91-101 (QYLLDHNSLAS) lie on the Extracellular side of the membrane. Residues 102–122 (VPCTLLTACFYVAMFASLCFI) form a helical membrane-spanning segment. At 123–145 (TEIALDRYYAIVYMRYRPVKQAC) the chain is on the cytoplasmic side. A helical transmembrane segment spans residues 146-166 (LFSIFWWIFAVIIAIPHFMVV). Over 167-183 (TKKDNQCMTDYDYLEVS) the chain is Extracellular. Residues 184–204 (YPIILNVELMLGAFVIPLSVI) form a helical membrane-spanning segment. Residues 205-228 (SYCYYRISRIVAVSQSRHKGRIVR) lie on the Cytoplasmic side of the membrane. The helical transmembrane segment at 229 to 249 (VLIAVVLVFIIFWLPYHLTLF) threads the bilayer. Over 250-273 (VDTLKLLKWISSSCEFERSLKRAL) the chain is Extracellular. A helical membrane pass occupies residues 274–294 (ILTESLAFCHCCLNPLLYVFV). Over 295–354 (GTKFRQELHCLLAEFRQRLFSRDVSWYHSMSFSRRSSPSRRETSSDTLSDEVCRVSQIIP) the chain is Cytoplasmic.

The protein belongs to the G-protein coupled receptor 1 family. As to quaternary structure, interacts with host GPRASP1; this interaction targets US28 to lysosomes for degradation. Interacts with host CX3CL1/Fractalkine (via N-terminus). Interacts with host Gi alpha-1 subunit GNAI1; this interaction does not lead to the catalytic activation of Gi complex. Post-translationally, phosphorylated. High phosphorylation occurs concomitantly with receptor endocytosis and correlate with low receptor presence at the plasma membrane.

The protein resides in the host cell membrane. In terms of biological role, binds to a great number of different CC-chemokines including CCL5/RANTES, CCL2/MCP-1, CCL3/MIP-1-alpha as well as CX3CL1/Fractalkine. Transduces signals resulting in the activation of MAP kinase signaling pathways and augmentation of intracellular calcium ion levels, leading to alterations in chemotactic behavior of vascular smooth muscle cells and macrophages. The US28 receptor also exhibits high levels of agonist-independent signaling activity and agonist-independent endocytosis. Interacts with the host Gi complex without activating it, thereby probably interfering with the chemokine-Gi signaling. May also function as a G protein sink to sequester G protein from the cell surface via internalization. Interacts with endogenous Gaq/11 subunits and thereby constitutively activates phospholipase C. This is G-protein coupled receptor homolog US28 (US28) from Homo sapiens (Human).